We begin with the raw amino-acid sequence, 689 residues long: MNSKARSLLWTIRRFSTLLPRSRALRIDPLGTCRPEVIHSKWNPRNHRLNVFDEGLQPSVRYLFQDIFISKSVDGCIQTKGISHSAVFKPDRLLCPRRLSFDAKHSFVSDGTSDHDLKKINFHHTSSEDVFTKKVRPTPVNYKKLAQECNSLSDVLDTFSKAPTFPGSNYFLAMWIIAKRISEDKRRFERQLMFSHPAFNQLCEQMMREAKIMHYDHLLFSLNAIVKLGIPQNTLMVQTLLRTIQERINECDERCLSILSTALVSMEPCMNVNALRAGLRILVDQQVWNIKHVFTLQTVMKCIGKDAPSALKKKLEMKALKELGRFSILNSQHMFEVLAAMDLRSVVLLNECSKVVIDNVHGCPFKVLISILQSCRDLRYQNEDLFKSIAEYVATTFDIWKLKQVIFFLLLFETLGFRPPGLMDKLMEKVVQEPGSLNVKNIVSILHVYSSLNHVHKIHNREFLEALASALTGCLHHISSESLLNAVHSFCMMNYFPLAPINQLIKENIINELLTSGDTEKNIHKLHVLNTCLKLDESTYKSVHIPLPQLPLSASQPNEKLAEVLSRLLEGEGRFSRNVPLPHNYHIDFEIRMDTNRTQVFSFSDVDASSATNMQRVAVLCVPKSVYCLNSCHPRGLMAMKIRHLNVMGFHVILIHNWELKKLKMEDAVTFVRKKIYSDEVLPTADTTV.

S113 and S126 each carry phosphoserine. An RAP domain is found at 617–674 (VAVLCVPKSVYCLNSCHPRGLMAMKIRHLNVMGFHVILIHNWELKKLKMEDAVTFVRK).

The protein belongs to the FAST kinase family. Monomer. Found in a complex with GRSF1, DDX28, DHX30 and FASTKD5. Associates with the 16S mitochondrial rRNA (16S mt-rRNA). Forms a regulatory protein-RNA complex, consisting of RCC1L, NGRN, RPUSD3, RPUSD4, TRUB2, FASTKD2 and 16S mt-rRNA. In terms of tissue distribution, ubiquitously expressed. Expression detected in spleen, testis, colon, heart, smooth muscle, kidney, brain, lung, liver, brown and white adipose tissue with highest expression in testis, heart and smooth muscle.

It localises to the mitochondrion matrix. It is found in the mitochondrion nucleoid. In terms of biological role, plays an important role in assembly of the mitochondrial large ribosomal subunit. As a component of a functional protein-RNA module, consisting of RCC1L, NGRN, RPUSD3, RPUSD4, TRUB2, FASTKD2 and 16S mitochondrial ribosomal RNA (16S mt-rRNA), controls 16S mt-rRNA abundance and is required for intra-mitochondrial translation. May play a role in mitochondrial apoptosis. In Mus musculus (Mouse), this protein is FAST kinase domain-containing protein 2, mitochondrial (Fastkd2).